The sequence spans 64 residues: Conotoxin Mr3.5 (64 aa).

Residues 1–19 (MSKLGVLLTICLLLFPLTA) form the signal peptide. Positions 20-46 (LPLDGDQPADQRAERTQAEKHSLPDPR) are excised as a propeptide. Intrachain disulfides connect Cys49–Cys58, Cys50–Cys62, and Cys54–Cys63. Cys63 is modified (cysteine amide).

This sequence belongs to the conotoxin M superfamily. In terms of tissue distribution, expressed by the venom duct.

It localises to the secreted. The protein is Conotoxin Mr3.5 of Conus marmoreus (Marble cone).